Here is a 310-residue protein sequence, read N- to C-terminus: Tagatose-6-phosphate kinase (310 aa).

It belongs to the carbohydrate kinase PfkB family. LacC subfamily.

It carries out the reaction D-tagatofuranose 6-phosphate + ATP = D-tagatofuranose 1,6-bisphosphate + ADP + H(+). It functions in the pathway carbohydrate metabolism; D-tagatose 6-phosphate degradation; D-glyceraldehyde 3-phosphate and glycerone phosphate from D-tagatose 6-phosphate: step 1/2. This is Tagatose-6-phosphate kinase from Streptococcus mutans serotype c (strain ATCC 700610 / UA159).